Here is a 395-residue protein sequence, read N- to C-terminus: MTLPVNPVDNLAALIRCPSVTPAEGGALTALEKMLKLMGFSANRPVFSDDNTPDIENLYARKSGNGPHLMFAGHTDVVPPGDEKDWKHPPFAAAIEDGVMYGRGAVDMKGGIACFVAAVARHIEKHGNIKGSISFLITGDEEGPAVNGTVKLLEWAKQRGESWDASIVGEPTNPNALGDMIKIGRRGSLSGTITVHGVQGHAAYPHLAENPVRGIVTLVDSLLYPAFDEGTANFQASNLEVTTIDVGNKATNVIPNKATASFNIRFNDTWTAESLQAEIISRLERAARDNRLRQGRETPIKYELTWRERPSHVFLTHDEKLIGTLTASVEAVTGKRPELSTSGGTSDARFIKDYCPVVEFGLTGQTMHMVDERVALADLEGLTQIYERFIADFFG.

His-74 serves as a coordination point for Zn(2+). Asp-76 is a catalytic residue. Zn(2+) is bound at residue Asp-107. Glu-141 (proton acceptor) is an active-site residue. Zn(2+) is bound by residues Glu-142, Glu-170, and His-368.

It belongs to the peptidase M20A family. DapE subfamily. Homodimer. Zn(2+) is required as a cofactor. Requires Co(2+) as cofactor.

It carries out the reaction N-succinyl-(2S,6S)-2,6-diaminopimelate + H2O = (2S,6S)-2,6-diaminopimelate + succinate. It functions in the pathway amino-acid biosynthesis; L-lysine biosynthesis via DAP pathway; LL-2,6-diaminopimelate from (S)-tetrahydrodipicolinate (succinylase route): step 3/3. Its function is as follows. Catalyzes the hydrolysis of N-succinyl-L,L-diaminopimelic acid (SDAP), forming succinate and LL-2,6-diaminopimelate (DAP), an intermediate involved in the bacterial biosynthesis of lysine and meso-diaminopimelic acid, an essential component of bacterial cell walls. In Brucella melitensis biotype 2 (strain ATCC 23457), this protein is Succinyl-diaminopimelate desuccinylase.